Consider the following 307-residue polypeptide: UDP-3-O-acyl-N-acetylglucosamine deacetylase (307 aa).

Zn(2+) contacts are provided by histidine 80, histidine 239, and aspartate 243. The active-site Proton donor is the histidine 266.

It belongs to the LpxC family. Zn(2+) is required as a cofactor.

The catalysed reaction is a UDP-3-O-[(3R)-3-hydroxyacyl]-N-acetyl-alpha-D-glucosamine + H2O = a UDP-3-O-[(3R)-3-hydroxyacyl]-alpha-D-glucosamine + acetate. It functions in the pathway glycolipid biosynthesis; lipid IV(A) biosynthesis; lipid IV(A) from (3R)-3-hydroxytetradecanoyl-[acyl-carrier-protein] and UDP-N-acetyl-alpha-D-glucosamine: step 2/6. Its function is as follows. Catalyzes the hydrolysis of UDP-3-O-myristoyl-N-acetylglucosamine to form UDP-3-O-myristoylglucosamine and acetate, the committed step in lipid A biosynthesis. This chain is UDP-3-O-acyl-N-acetylglucosamine deacetylase, found in Neisseria meningitidis serogroup A / serotype 4A (strain DSM 15465 / Z2491).